Consider the following 172-residue polypeptide: Acetolactate synthase small subunit (172 aa).

Positions 4 to 78 (TLSVLVEDEA…NVIKVQDITE (75 aa)) constitute an ACT domain.

This sequence belongs to the acetolactate synthase small subunit family. Dimer of large and small chains.

The enzyme catalyses 2 pyruvate + H(+) = (2S)-2-acetolactate + CO2. It functions in the pathway amino-acid biosynthesis; L-isoleucine biosynthesis; L-isoleucine from 2-oxobutanoate: step 1/4. The protein operates within amino-acid biosynthesis; L-valine biosynthesis; L-valine from pyruvate: step 1/4. The protein is Acetolactate synthase small subunit (ilvH) of Synechocystis sp. (strain ATCC 27184 / PCC 6803 / Kazusa).